We begin with the raw amino-acid sequence, 2028 residues long: Transient receptor potential cation channel subfamily M member 6 (2028 aa).

Topologically, residues 1–747 (MQVKKSWIEG…MWMGRLKMRK (747 aa)) are cytoplasmic. The disordered stretch occupies residues 577-601 (QPYKSKEKPEDSQKSKKKSKERQSL). Over residues 580–590 (KSKEKPEDSQK) the composition is skewed to basic and acidic residues. The chain crosses the membrane as a helical span at residues 748–768 (NSWLKIIISILLPPMILTLEF). Over 769–847 (KSKAEMSHVP…YEFYSAPFVK (79 aa)) the chain is Extracellular. The helical transmembrane segment at 848 to 868 (FWFYTMAYLAFLMLFTYTVLV) threads the bilayer. Residues 869–910 (EMQPQPSVHEWLVIIYIFTNAIEKVREICISEPSKFKQKVKM) are Cytoplasmic-facing. A helical membrane pass occupies residues 911-931 (WLSEYWNLMETVAIGLFAVGF). The Extracellular segment spans residues 932–945 (GLRWGHPPLQTAGR). Residues 946 to 966 (LIYCIDIIFWFSRLMDFFAVN) form a helical membrane-spanning segment. Topologically, residues 967-978 (QHAGPYVTMIAK) are cytoplasmic. A helical membrane pass occupies residues 979–999 (MAANMFYIVIIMAIVLLSFGV). Residues 1000–1018 (ARKAILSPKEPPSWRLARD) are Extracellular-facing. Residues 1019-1039 (IVFEPYWMMYGEVYASDIDVC) constitute an intramembrane region (pore-forming). At 1040-1053 (SNETSCPPGSFLTP) the chain is on the extracellular side. A helical membrane pass occupies residues 1054–1074 (FLQAVYLFVQYIIMVNLLIAC). Residues 1075–2028 (FNNIYLDIKS…RSSLEDHTRL (954 aa)) are Cytoplasmic-facing. Basic and acidic residues-rich tracts occupy residues 1313-1323 (KREASHVREEQ) and 1665-1677 (DHLRQPQENRDKT). 2 disordered regions span residues 1313 to 1339 (KREASHVREEQEEREMEQRTTASGISH) and 1658 to 1694 (RHTTQASDHLRQPQENRDKTPTWNSGSTSLSRSFLTR). Residues 1682–1694 (SGSTSLSRSFLTR) show a composition bias toward low complexity. Residue Thr1730 is modified to Phosphothreonine; by autocatalysis. Positions 1756 to 1986 (TLDKSMSSWS…CCGKLRLPDL (231 aa)) constitute an Alpha-type protein kinase domain. Residues Gly1783, Gly1784, Leu1785, Arg1786, and Lys1810 each coordinate ADP. At Thr1857 the chain carries Phosphothreonine; by autocatalysis. ADP contacts are provided by Glu1882 and Met1885. His1915 contributes to the Zn(2+) binding site. The active-site Proton acceptor is Asp1929. Asp1939 lines the ADP pocket. Positions 1972, 1974, and 1978 each coordinate Zn(2+). Positions 2009-2028 (TEELPERDKNRSSLEDHTRL) are disordered. The span at 2012-2028 (LPERDKNRSSLEDHTRL) shows a compositional bias: basic and acidic residues.

It in the C-terminal section; belongs to the protein kinase superfamily. Alpha-type protein kinase family. ALPK subfamily. In the N-terminal section; belongs to the transient receptor (TC 1.A.4) family. LTrpC subfamily. TRPM6 sub-subfamily. In terms of assembly, forms heteromers with TRPM7; TRPM6 increases the current amplitude of TRPM6/7 heteromers as compared to TRPM7 homomers. Interacts (via kinase domain) with RACK1. Post-translationally, autophosphorylated; autophosphorylation controls the protein kinase activity of TRPM6 towards their substrates. Autophosphorylation of Thr-1857 in the kinase domain is essential for the inhibitory effect of RACK1. In terms of processing, the C-terminus of TRPM6 is proteolytically cleaved in vivo, in a cell type-specific fashion, releasing the kinase module from the transmembrane domain. The cleaved kinase fragments are translocated to the nucleus to phosphorylate histones and regulate gene expression.

The protein resides in the cell membrane. Its subcellular location is the apical cell membrane. The protein localises to the nucleus. The enzyme catalyses L-seryl-[protein] + ATP = O-phospho-L-seryl-[protein] + ADP + H(+). It catalyses the reaction L-threonyl-[protein] + ATP = O-phospho-L-threonyl-[protein] + ADP + H(+). The catalysed reaction is Mg(2+)(in) = Mg(2+)(out). It carries out the reaction Ca(2+)(in) = Ca(2+)(out). The enzyme catalyses Zn(2+)(in) = Zn(2+)(out). With respect to regulation, strongly inhibited by intracellular Mg(2+); unlikely to be active at physiological levels of intracellular Mg(2+). In the heteromeric TRPM6-TRPM7 channels complexes, TRPM7 are able to offset the very high sensitivity of TRPM6 to cytosolic Mg(2+) to physiologically relevant concentrations, whereas TRPM6 relieve TRPM7 from the inhibitory action of Mg-ATP. Consequently, the association of TRPM6 with TRPM7 allow for high constitutive activity of TRPM6/7 in the presence of physiological levels of Mg(2+) and Mg-ATP. The kinase activity is controlled through the autophosphorylation of a serine/threonine-rich region located to the N-terminal of the catalytic domain. Bifunctional protein that combines an ion channel with an intrinsic kinase domain, enabling it to modulate cellular functions either by conducting ions through the pore or by phosphorylating downstream proteins via its kinase domain. Crucial for Mg(2+) homeostasis. Has an important role in epithelial magnesium transport and in the active Mg(2+) absorption in the gut and kidney. However, whether TRPM6 forms functional homomeric channels by itself or functions primarily as a subunit of heteromeric TRPM6-TRPM7 channels, is still under debate. In terms of biological role, the C-terminal kinase domain can be cleaved from the channel segment in a cell-type-specific fashion. The cleaved kinase fragments can translocate to the nucleus, and bind chromatin-remodeling complex proteins to ultimately phosphorylate specific Ser/Thr residues of histones known to be functionally important for cell differentiation and development. The chain is Transient receptor potential cation channel subfamily M member 6 (Trpm6) from Mus musculus (Mouse).